The sequence spans 236 residues: Large ribosomal subunit protein uL3 (236 aa).

Disordered regions lie at residues 132–153 and 200–236; these read SNRA…GMAQ and KGGD…KKGG. A compositionally biased stretch (polar residues) spans 133–145; that stretch reads NRASHGNSRSHNV. Gln153 bears the N5-methylglutamine mark. Residues 206–216 show a composition bias toward polar residues; that stretch reads VSPSIRSARPT. Positions 217–228 are enriched in low complexity; the sequence is NNGNVNAAAKGG.

It belongs to the universal ribosomal protein uL3 family. In terms of assembly, part of the 50S ribosomal subunit. Forms a cluster with proteins L14 and L19. Post-translationally, methylated by PrmB.

In terms of biological role, one of the primary rRNA binding proteins, it binds directly near the 3'-end of the 23S rRNA, where it nucleates assembly of the 50S subunit. This chain is Large ribosomal subunit protein uL3, found in Nitrosospira multiformis (strain ATCC 25196 / NCIMB 11849 / C 71).